Here is a 172-residue protein sequence, read N- to C-terminus: Translation initiation factor IF-3 (172 aa).

Belongs to the IF-3 family. As to quaternary structure, monomer.

It is found in the cytoplasm. Its function is as follows. IF-3 binds to the 30S ribosomal subunit and shifts the equilibrium between 70S ribosomes and their 50S and 30S subunits in favor of the free subunits, thus enhancing the availability of 30S subunits on which protein synthesis initiation begins. The sequence is that of Translation initiation factor IF-3 from Campylobacter jejuni subsp. jejuni serotype O:6 (strain 81116 / NCTC 11828).